The primary structure comprises 208 residues: GTP cyclohydrolase 1 (208 aa).

3 residues coordinate Zn(2+): cysteine 89, histidine 92, and cysteine 163.

It belongs to the GTP cyclohydrolase I family. Homomer.

It catalyses the reaction GTP + H2O = 7,8-dihydroneopterin 3'-triphosphate + formate + H(+). It participates in cofactor biosynthesis; 7,8-dihydroneopterin triphosphate biosynthesis; 7,8-dihydroneopterin triphosphate from GTP: step 1/1. The protein is GTP cyclohydrolase 1 of Saccharolobus islandicus (strain Y.N.15.51 / Yellowstone #2) (Sulfolobus islandicus).